The chain runs to 334 residues: Protein CUP-SHAPED COTYLEDON 3 (334 aa).

Residues 22-171 (LPPGFRFHPT…EWVICRVFNK (150 aa)) enclose the NAC domain. The DNA-binding element occupies 121-177 (VGMKKTLVFYKGRAPRGLKTKWVMHEYRLENDHSHRHTCKEEWVICRVFNKTGDRKN).

In a general manner, present at the boundaries between mersitems and araising primordia.

It localises to the nucleus. Functionally, transcription activator. Involved in molecular mechanisms regulating shoot apical meristem (SAM) formation during embryogenesis and organ separation. Required for axillary meristem initiation and separation of the meristem from the main stem. May act as an inhibitor of cell division. The sequence is that of Protein CUP-SHAPED COTYLEDON 3 (NAC031) from Arabidopsis thaliana (Mouse-ear cress).